The primary structure comprises 442 residues: NADH-quinone oxidoreductase subunit D (442 aa).

This sequence belongs to the complex I 49 kDa subunit family. As to quaternary structure, NDH-1 is composed of 14 different subunits. Subunits NuoB, C, D, E, F, and G constitute the peripheral sector of the complex.

It localises to the cell membrane. It catalyses the reaction a quinone + NADH + 5 H(+)(in) = a quinol + NAD(+) + 4 H(+)(out). NDH-1 shuttles electrons from NADH, via FMN and iron-sulfur (Fe-S) centers, to quinones in the respiratory chain. The immediate electron acceptor for the enzyme in this species is believed to be a menaquinone. Couples the redox reaction to proton translocation (for every two electrons transferred, four hydrogen ions are translocated across the cytoplasmic membrane), and thus conserves the redox energy in a proton gradient. The protein is NADH-quinone oxidoreductase subunit D of Mycolicibacterium vanbaalenii (strain DSM 7251 / JCM 13017 / BCRC 16820 / KCTC 9966 / NRRL B-24157 / PYR-1) (Mycobacterium vanbaalenii).